The sequence spans 1012 residues: Vacuolar membrane protease (1012 aa).

Residues 1-60 (MRRSTDPRNLLVRRGPLLVDGESAISELDPGFFPTGDAPKMSSTTRRRFNLIAFTPGPVT) are Cytoplasmic-facing. The chain crosses the membrane as a helical span at residues 61-81 (VISSLVYLALLIPLLLVHTIV). Residues 82-432 (PSAPKSNPKG…SFAVFRLHTL (351 aa)) lie on the Vacuolar side of the membrane. N159 carries N-linked (GlcNAc...) asparagine glycosylation. The Zn(2+) site is built by H215 and D227. E261 (proton acceptor) is an active-site residue. 3 residues coordinate Zn(2+): E262, E287, and H360. A helical transmembrane segment spans residues 433–453 (FAISVTLLVVCPIVLFVIGII). Residues 454–487 (LSKMDKMYLFSIHETIPETKEKVSVRGLRGLFRY) lie on the Cytoplasmic side of the membrane. The chain crosses the membrane as a helical span at residues 488-508 (PIILVVSSGILIGLSYLLAKV). At 509-518 (NPFIVHSSSY) the chain is on the vacuolar side. The chain crosses the membrane as a helical span at residues 519–539 (AVWSMMLSSWIFMTWFLSCIA). Residues 540-550 (DFFRPSALHRA) are Cytoplasmic-facing. A helical membrane pass occupies residues 551-571 (YTFTWQLLVMWVLLVISTVYV). Over 572–575 (NQHD) the chain is Vacuolar. The helical transmembrane segment at 576 to 596 (IAAGYFIVFYFAGTFLATLIS) threads the bilayer. Topologically, residues 597–710 (YLELFALPNK…WSASLPTWTW (114 aa)) are cytoplasmic. The segment covering 614–629 (SQYPSRLGSNRSSRIL) has biased composition (polar residues). The tract at residues 614–660 (SQYPSRLGSNRSSRILSPSADELPTGGDNNGEIYDGEEEPTESSSLL) is disordered. A helical transmembrane segment spans residues 711 to 731 (VLQFLFVGPVVIMFIGQLGLF). The Vacuolar portion of the chain corresponds to 732–743 (LTSAMNQVGADG). A helical transmembrane segment spans residues 744–764 (VGLLVVYIAIAVFSVLLLIPL). Topologically, residues 765–777 (SPFIHRFTYHVPT) are cytoplasmic. Residues 778-798 (FLLLVFIATLIYNLAAFPFSA) traverse the membrane as a helical segment. The Vacuolar segment spans residues 799 to 1012 (ENRLKIFFVQ…DGLVEVSRGF (214 aa)). N-linked (GlcNAc...) asparagine glycans are attached at residues N842 and N878.

This sequence belongs to the peptidase M28 family. Zn(2+) serves as cofactor.

It is found in the vacuole membrane. May be involved in vacuolar sorting and osmoregulation. This is Vacuolar membrane protease from Coccidioides posadasii (strain C735) (Valley fever fungus).